The chain runs to 252 residues: tRNA pseudouridine synthase A (252 aa).

Catalysis depends on Asp-52, which acts as the Nucleophile. Tyr-110 contacts substrate.

It belongs to the tRNA pseudouridine synthase TruA family. In terms of assembly, homodimer.

It catalyses the reaction uridine(38/39/40) in tRNA = pseudouridine(38/39/40) in tRNA. Formation of pseudouridine at positions 38, 39 and 40 in the anticodon stem and loop of transfer RNAs. The polypeptide is tRNA pseudouridine synthase A (Syntrophotalea carbinolica (strain DSM 2380 / NBRC 103641 / GraBd1) (Pelobacter carbinolicus)).